Reading from the N-terminus, the 428-residue chain is Flotillin-2 (428 aa).

Residue Gly-2 is the site of N-myristoyl glycine attachment. Cys-4 carries the S-palmitoyl cysteine; by ZDHHC5 lipid modification. A lipid anchor (S-palmitoyl cysteine) is attached at Cys-19. Residue Cys-20 is the site of S-palmitoyl cysteine; by ZDHHC5 attachment. Phosphoserine is present on Ser-405.

The protein belongs to the band 7/mec-2 family. Flotillin subfamily. Heterooligomeric complex of flotillin-1 and flotillin-2 and caveolin-1 and caveolin-2. Interacts with ECPAS. In terms of processing, ZDHHC5-catalyzed palmitoylation predominantly occurs at Cys-4. ZDHHC5-catalyzed palmitoylation may be required for the formation of higher-order complexes and for neurite outgrowth in cultured neural stem cells. In terms of tissue distribution, in skin, expressed in epidermis and epidermal appendages but not in dermis. Expressed in all layers of the epidermis except the basal layer. In hair follicles, expressed in the suprabasal layer but not the basal layer. Also expressed in melanoma and carcinoma cell lines, fibroblasts and foreskin melanocytes.

It localises to the cell membrane. Its subcellular location is the membrane. The protein localises to the caveola. It is found in the endosome. Its function is as follows. May act as a scaffolding protein within caveolar membranes, functionally participating in formation of caveolae or caveolae-like vesicles. May be involved in epidermal cell adhesion and epidermal structure and function. This is Flotillin-2 (FLOT2) from Homo sapiens (Human).